A 335-amino-acid chain; its full sequence is Anthranilate phosphoribosyltransferase (335 aa).

5-phospho-alpha-D-ribose 1-diphosphate-binding positions include Gly-79, 82-83 (GD), Thr-87, 89-92 (NVST), 107-115 (KHCNKGVSS), and Ser-119. Residue Gly-79 coordinates anthranilate. Ser-91 provides a ligand contact to Mg(2+). Asn-110 is an anthranilate binding site. Arg-165 contacts anthranilate. Residues Asp-223 and Glu-224 each contribute to the Mg(2+) site.

This sequence belongs to the anthranilate phosphoribosyltransferase family. As to quaternary structure, homodimer. The cofactor is Mg(2+).

The catalysed reaction is N-(5-phospho-beta-D-ribosyl)anthranilate + diphosphate = 5-phospho-alpha-D-ribose 1-diphosphate + anthranilate. It participates in amino-acid biosynthesis; L-tryptophan biosynthesis; L-tryptophan from chorismate: step 2/5. Its function is as follows. Catalyzes the transfer of the phosphoribosyl group of 5-phosphorylribose-1-pyrophosphate (PRPP) to anthranilate to yield N-(5'-phosphoribosyl)-anthranilate (PRA). The sequence is that of Anthranilate phosphoribosyltransferase from Buchnera aphidicola subsp. Schizaphis graminum (strain Sg).